The sequence spans 2559 residues: Nonribosomal peptide synthetase asqK (2559 aa).

The interval 90–474 (YRPSHTAIHA…SRKDSQVKIR (385 aa)) is adenylation 1. One can recognise a Carrier 1 domain in the interval 593 to 669 (TNIEQLVHEL…SLVHYPAGLE (77 aa)). Ser627 bears the O-(pantetheine 4'-phosphoryl)serine mark. A condensation 1 region spans residues 695 to 989 (TVEQSFSQAR…GNVQCIRTKV (295 aa)). The segment at 1155-1562 (FDEQVRAQTD…GRMDQQVKVR (408 aa)) is adenylation 2. A methyltransferase region spans residues 1681–1776 (LEIGTGSGMI…NTIKDLVRQG (96 aa)). The region spanning 2090 to 2164 (AFTSEIERAV…GLAQHLQGLG (75 aa)) is the Carrier 2 domain. Ser2124 is modified (O-(pantetheine 4'-phosphoryl)serine). Positions 2261 to 2409 (FDGVSLSAIL…VNRCLLRVKV (149 aa)) are condensation 2.

Belongs to the NRP synthetase family.

The catalysed reaction is O-methyl-L-tyrosine + anthranilate + S-adenosyl-L-methionine + 2 ATP = (-)-4'-methoxycyclopeptine + 2 AMP + S-adenosyl-L-homocysteine + 2 diphosphate + 2 H(+). It carries out the reaction anthranilate + L-phenylalanine + S-adenosyl-L-methionine + 2 ATP = cyclopeptine + 2 AMP + S-adenosyl-L-homocysteine + 2 diphosphate + 2 H(+). The protein operates within secondary metabolite biosynthesis. It participates in alkaloid biosynthesis. It functions in the pathway mycotoxin biosynthesis. Functionally, nonribosomal peptide synthetase; part of the gene cluster that mediates the biosynthesis of the aspoquinolone mycotoxins. The first stage is catalyzed by the nonribosomal peptide synthetase asqK that condenses anthranilic acid and O-methyl-L-tyrosine to produce 4'-methoxycyclopeptin. AsqK is also able to use anthranilic acid and L-phenylalanine as substrates to produce cyclopeptin, but at a tenfold lower rate. Within the pathway, 4'-methoxycyclopeptin is then converted to 4'-methoxydehydrocyclopeptin by the ketoglutarate-dependent dioxygenase asqJ. AsqJ also converts its first product 4'-methoxydehydrocyclopeptin to 4'-methoxycyclopenin. The following conversion of 4'-methoxycyclopenin into 4'-methoxyviridicatin is catalyzed by the cyclopenase asqI. 4'-methoxyviridicatin is the precursor of quinolone natural products, and is further converted to quinolinone B. The prenyltransferase asqH1 then catalyzes the canonical Friedel-Crafts alkylation of quinolinone B with dimethylallyl cation to yield dimethylallyl quinolone, which is subjected to FAD-dependent dehydrogenation by the FAD-linked oxidoreductase asqF to yield conjugated aryl diene. The delta(3') double bond then serves as the site of the second alkylation with DMAPP catalyzed by the prenyltransferase asqH2 to yield a carbenium ion intermediate, which can be attacked by H(2)O to yield a styrenyl quinolone containing a C3'-hydroxyprenyl chain. The FAD-dependent monooxygenase asqG performs epoxidation of the terminal C7'-C8' olefin. Finally, after dehydratation of the epoxide at C3 by asqC, the quinolone epoxide rearrangement protein asqO catalyzes an enzymatic 3-exo-tet cyclization to yield the cyclopropyl-THF ring system in aspoquinolone. In Emericella nidulans (strain FGSC A4 / ATCC 38163 / CBS 112.46 / NRRL 194 / M139) (Aspergillus nidulans), this protein is Nonribosomal peptide synthetase asqK.